The primary structure comprises 315 residues: tRNA dimethylallyltransferase (315 aa).

Residue 10–17 (GPTEVGKT) coordinates ATP. 12–17 (TEVGKT) provides a ligand contact to substrate. The interaction with substrate tRNA stretch occupies residues 35 to 38 (DSMQ).

This sequence belongs to the IPP transferase family. Monomer. Mg(2+) serves as cofactor.

It catalyses the reaction adenosine(37) in tRNA + dimethylallyl diphosphate = N(6)-dimethylallyladenosine(37) in tRNA + diphosphate. In terms of biological role, catalyzes the transfer of a dimethylallyl group onto the adenine at position 37 in tRNAs that read codons beginning with uridine, leading to the formation of N6-(dimethylallyl)adenosine (i(6)A). This is tRNA dimethylallyltransferase from Geobacillus thermodenitrificans (strain NG80-2).